The sequence spans 569 residues: MTTDNKFVVEGKLADNERLKGESNFLRGTIAEDLKDDLTGAFVGDNFQLIRFHGMYQQDDRDLRAERAKQKLEPLQNVMLRARLPGGIIKPQQWLAIDKFAEEKSLYGSIRLTTRQTFQFHGVLKPNIKLMHQTLNQVGIDSIATAGDVNRNVLCTSNPIESAVHQEAYEWATKISEHLLPKTRAYAEIWLDGEKKETTDHEPILGANYLPRKFKTTVAIPPLNDVDVHANDLNFIAISKDGKLVGFNVLVGGGLAMTHGDHATFPRKASDFGFIKVEDTLAIAEAVVSTQRDWGNRVNRKNAKTKYTLERVGVENFKAEVEKRSGVTFGESQAYEFTERGDRIGWVEGIDGKHHLTLFIENGRILDYPGKPLKTGCAEIAKIHDGDFRLTANQNLIVAGVSEQNKAKVEEIARAHGLIEDDLSAQRKDSMACVALPTCPLAMAEAERYLPEAVTQLEGILAKHAIAQKSIIYRVTGCPNGCGRSMLAEIGLVGKGPGKYNLHLGGNRQGTRIPKMYKENIGEQQIMDELDVLIGQWAKEAQSDESFGDFVIRTGVIAEVVNSAEDFYA.

[4Fe-4S] cluster is bound by residues Cys433, Cys439, Cys478, and Cys482. Cys482 lines the siroheme pocket.

It belongs to the nitrite and sulfite reductase 4Fe-4S domain family. Alpha(8)-beta(8). The alpha component is a flavoprotein, the beta component is a hemoprotein. Siroheme is required as a cofactor. The cofactor is [4Fe-4S] cluster.

The enzyme catalyses hydrogen sulfide + 3 NADP(+) + 3 H2O = sulfite + 3 NADPH + 4 H(+). Its pathway is sulfur metabolism; hydrogen sulfide biosynthesis; hydrogen sulfide from sulfite (NADPH route): step 1/1. In terms of biological role, component of the sulfite reductase complex that catalyzes the 6-electron reduction of sulfite to sulfide. This is one of several activities required for the biosynthesis of L-cysteine from sulfate. The sequence is that of Sulfite reductase [NADPH] hemoprotein beta-component from Pseudoalteromonas atlantica (strain T6c / ATCC BAA-1087).